Here is an 823-residue protein sequence, read N- to C-terminus: MLRLGLCAAALLCVCQPGAVRADCWLIEGDKGYVWLAICSQNQPPYETIPQHINSTVHDLRLNENKLKAVLYSSLNRFGNLTDLNLTKNEISYIEDGAFLGQTSLQVLQLGYNRLSNLTEGMLRGMSRLQFLFVQHNLIEVVTPTAFSECPSLISIDLSSNRLSRLDGATFASLASLMVCELAGNPFNCECDLFGFLAWLVVFNNVTKNYDRLQCESPREFAGYPLLVPRPYHSLNAITVLQAKCRNGSMPARPVSHPTPYSTDAQREPDENSGFNPDEILSVEPPASSTTDASAGPAIKLHQVTFTSATLVVIIPHPYSKMYVLVQYNNSYFSDVMTLKNKKEIVTLDKLRAHTEYTFCVTSLRNSRRFNHTCLTFTTRDLVPGDLAPSTSTTTHYIMTILGCLFGMVIVLGAVYYCLRKRRMQEEKQKSVNVKKTILEMRYGADVDAGSIVHAAQKLGEPPVLPVARMSSIPSMVGEKLPASKGLEAGLDTPKVATKGNYIEVRTGAAGDSLARPEEELPEIENGQGSAAEISTIAKEVDKVNQIINNCIDALKLDSASFLGGGGGGGGGGDSDLAFECQSLPAAPAASSAATPGALERPSFLSPPYKESSHHPLQRQLSADAAVSRKTCSVSSSGSIKSAKVFSLDVPDHPTPTGLAKSDSKYIEKGSPLNSPLDRLPLVPTGSSGSSGGGGGIHHLEVKPAYHCSEHRHSFPALYYEEGADSLSQRVSFLKPLTRSKRDSTYSQLSPRHYYSGYSSSPEYSSESTHKIWERFRPYKKHHREEVYMAAGHALRKKVQFAKDEDLHDILDYWKGVSAQQKL.

The first 22 residues, 1-22 (MLRLGLCAAALLCVCQPGAVRA), serve as a signal peptide directing secretion. At 23–397 (DCWLIEGDKG…APSTSTTTHY (375 aa)) the chain is on the extracellular side. Asparagine 54 carries an N-linked (GlcNAc...) asparagine glycan. 5 LRR repeats span residues 56–77 (TVHD…SLNR), 80–101 (NLTD…AFLG), 104–125 (SLQV…MLRG), 128–149 (RLQF…AFSE), and 152–173 (SLIS…TFAS). Residues asparagine 80, asparagine 85, and asparagine 117 are each glycosylated (N-linked (GlcNAc...) asparagine). One can recognise an LRRCT domain in the interval 185–247 (NPFNCECDLF…ITVLQAKCRN (63 aa)). N-linked (GlcNAc...) asparagine glycans are attached at residues asparagine 205 and asparagine 247. Positions 249–294 (SMPARPVSHPTPYSTDAQREPDENSGFNPDEILSVEPPASSTTDAS) are disordered. One can recognise a Fibronectin type-III domain in the interval 292–379 (DASAGPAIKL…FNHTCLTFTT (88 aa)). The chain crosses the membrane as a helical span at residues 398-418 (IMTILGCLFGMVIVLGAVYYC). The Cytoplasmic segment spans residues 419–823 (LRKRRMQEEK…WKGVSAQQKL (405 aa)). The disordered stretch occupies residues 590–624 (ASSAATPGALERPSFLSPPYKESSHHPLQRQLSAD). Phosphoserine occurs at positions 622, 671, and 675.

Interacts with PPP1CA.

Its subcellular location is the membrane. In terms of biological role, inhibits phosphatase activity of protein phosphatase 1 (PP1) complexes. The sequence is that of Protein phosphatase 1 regulatory subunit 29 (Elfn2) from Mus musculus (Mouse).